The chain runs to 282 residues: tRNA pseudouridine synthase A (282 aa).

The active-site Nucleophile is the D51. Substrate is bound at residue Y109.

It belongs to the tRNA pseudouridine synthase TruA family. Homodimer.

The catalysed reaction is uridine(38/39/40) in tRNA = pseudouridine(38/39/40) in tRNA. Its function is as follows. Formation of pseudouridine at positions 38, 39 and 40 in the anticodon stem and loop of transfer RNAs. This chain is tRNA pseudouridine synthase A, found in Delftia acidovorans (strain DSM 14801 / SPH-1).